We begin with the raw amino-acid sequence, 123 residues long: Large ribosomal subunit protein bL12 (123 aa).

Belongs to the bacterial ribosomal protein bL12 family. As to quaternary structure, homodimer. Part of the ribosomal stalk of the 50S ribosomal subunit. Forms a multimeric L10(L12)X complex, where L10 forms an elongated spine to which 2 to 4 L12 dimers bind in a sequential fashion. Binds GTP-bound translation factors.

Forms part of the ribosomal stalk which helps the ribosome interact with GTP-bound translation factors. Is thus essential for accurate translation. This chain is Large ribosomal subunit protein bL12, found in Geobacillus kaustophilus (strain HTA426).